A 359-amino-acid polypeptide reads, in one-letter code: HTH-type transcriptional regulator Rv3575c (359 aa).

Positions 9 to 64 constitute an HTH lacI-type domain; sequence ATLASLAAELKVSRTTVSNAFNRPDQLSADLRERVLATAKRLGYAGPDPVARSLRT. A DNA-binding region (H-T-H motif) is located at residues 11–30; it reads LASLAAELKVSRTTVSNAFN.

Its function is as follows. Transcriptional regulator that negatively regulates transcription of the mce4 operon, which is involved in cholesterol transport and utilization. Acts by binding to the promoter region of the mce4 operon. It affects the utilization of host cholesterol as a carbon source, impacting the host's innate immune response. In Mycobacterium tuberculosis (strain ATCC 25618 / H37Rv), this protein is HTH-type transcriptional regulator Rv3575c.